The chain runs to 258 residues: Acetylglutamate kinase (258 aa).

Residues 44–45 (GG), arginine 66, and asparagine 158 contribute to the substrate site. Residues 181–186 (DISSIL) and 209–211 (IIT) each bind ATP.

It belongs to the acetylglutamate kinase family. ArgB subfamily. As to quaternary structure, homodimer.

The protein resides in the cytoplasm. It catalyses the reaction N-acetyl-L-glutamate + ATP = N-acetyl-L-glutamyl 5-phosphate + ADP. It functions in the pathway amino-acid biosynthesis; L-arginine biosynthesis; N(2)-acetyl-L-ornithine from L-glutamate: step 2/4. In terms of biological role, catalyzes the ATP-dependent phosphorylation of N-acetyl-L-glutamate. This Buchnera aphidicola subsp. Schizaphis graminum (strain Sg) protein is Acetylglutamate kinase.